A 548-amino-acid chain; its full sequence is MQFLEFAQVCEHLEGTPGRLDMIEQVAAVLPRLDDEELPVFVRFVMGRVFPDWSTKKLGVGPNLLYDAVAYVVGTKRETVREAINTTGDVGLAVEGLLARKEQTSFFIQELDLLDVYRELERMAAAEGQRSQREKLRVAQGLFGNARPLEGRYLARLLLEELRIGMGEGNVRDAVAKAFELDVRLVEHAHQALNDLGEVALLARRDPDALSGVTIEPFRPVKMMLAQAGTIAAQIEDHGEVAVEYKYDGSRFQFHKVGDVCRIYSRRLEDVTESLPDIANLLLEATDHDVILDGEAVAVRDGKPMPFQYVIRRFRRKHEVDSMMEKIELVPMVFDILYLDGETLMDRPLAERRKALDEVLGAHVAPQFPATDAAAAEAIYAEALDLGHEGVMVKVLDSPYTPGVRGRLWVKVKPGVETLDLVVVGAEWGEGRRAGTFGSFLLAVQDQGRLLPVGKVATGITDEVLAELYALFKDRVIARSGKEVTLEPEVVFEVGYSEIQTSPNYESGYALRFPRFVRVREDKSVDETETLDSLAERYGRQRNGQGSL.

E244 serves as a coordination point for ATP. The active-site N6-AMP-lysine intermediate is K246. ATP-binding residues include R251, R266, E295, F334, R405, and K411.

The protein belongs to the ATP-dependent DNA ligase family. Requires Mg(2+) as cofactor.

The enzyme catalyses ATP + (deoxyribonucleotide)n-3'-hydroxyl + 5'-phospho-(deoxyribonucleotide)m = (deoxyribonucleotide)n+m + AMP + diphosphate.. Its function is as follows. DNA ligase that seals nicks in double-stranded DNA during DNA replication, DNA recombination and DNA repair. The sequence is that of DNA ligase from Methanoculleus marisnigri (strain ATCC 35101 / DSM 1498 / JR1).